The sequence spans 566 residues: Proline--tRNA ligase 1 (566 aa).

Belongs to the class-II aminoacyl-tRNA synthetase family. ProS type 1 subfamily. Homodimer.

Its subcellular location is the cytoplasm. The catalysed reaction is tRNA(Pro) + L-proline + ATP = L-prolyl-tRNA(Pro) + AMP + diphosphate. Catalyzes the attachment of proline to tRNA(Pro) in a two-step reaction: proline is first activated by ATP to form Pro-AMP and then transferred to the acceptor end of tRNA(Pro). As ProRS can inadvertently accommodate and process non-cognate amino acids such as alanine and cysteine, to avoid such errors it has two additional distinct editing activities against alanine. One activity is designated as 'pretransfer' editing and involves the tRNA(Pro)-independent hydrolysis of activated Ala-AMP. The other activity is designated 'posttransfer' editing and involves deacylation of mischarged Ala-tRNA(Pro). The misacylated Cys-tRNA(Pro) is not edited by ProRS. The sequence is that of Proline--tRNA ligase 1 from Bacillus cereus (strain ATCC 14579 / DSM 31 / CCUG 7414 / JCM 2152 / NBRC 15305 / NCIMB 9373 / NCTC 2599 / NRRL B-3711).